A 66-amino-acid polypeptide reads, in one-letter code: Ocellatin-PT5 (66 aa).

Positions 1–22 (MAFLKKSLFLVLFLGLVSLSIC) are cleaved as a signal peptide. Positions 23-39 (DEEKRQDEDDDDDDDEE) are excised as a propeptide. Valine 66 is subject to Valine amide.

Expressed by the skin glands.

It is found in the secreted. Has antibacterial activity against Gram-negative bacterium E.coli ATCC 25922 (MIC=300 uM) but not against S.pneumoniae ATCC 700603, S.choleraesuis ATCC 14028 or Gram-positive bacterium S.aureus ATCC 29313. Shows very little hemolytic activity and no cytotoxicity. The protein is Ocellatin-PT5 of Leptodactylus pustulatus (Ceara white-lipped frog).